Consider the following 1006-residue polypeptide: 5'-3' exoribonuclease 2 (1006 aa).

Coiled-coil stretches lie at residues 256–287 and 453–544; these read FAQD…NSEQ and RLKK…AESE. The required for retention in the nucleus stretch occupies residues 492 to 529; sequence DDAVSKANKTNFNLAEVMKQKIINKKHRLEKDNEEEEI. The segment covering 561 to 575 has biased composition (basic and acidic residues); the sequence is DRENSETTEVSRDSP. Disordered regions lie at residues 561–584 and 939–1006; these read DREN…NVSE and HNYG…ANRR. Position 574 is a phosphoserine (Ser-574). Polar residues predominate over residues 939 to 956; the sequence is HNYGRNSYNSQPGFNNSR. 6 repeat units span residues 955–958, 961–964, 972–974, 975–978, 984–986, and 996–999. A 2 X 4 AA repeats of S-R-Y-D, N-N-N-Y, Y-S-G-N region spans residues 955-999; it reads SRYDGGNNNYRQNSNYRNNNYSGNRNSGQYSGNSYSRNNKQSRYD. Residues 959–993 are compositionally biased toward low complexity; the sequence is GGNNNYRQNSNYRNNNYSGNRNSGQYSGNSYSRNN. A compositionally biased stretch (basic and acidic residues) spans 996 to 1006; the sequence is SRYDNSRANRR.

It belongs to the 5'-3' exonuclease family. XRN2/RAT1 subfamily. In terms of assembly, interacts with RAI1 and RTT103. Requires Mg(2+) as cofactor. The cofactor is Mn(2+).

The protein localises to the nucleus. With respect to regulation, inhibited by nucleoside 3', 5'-bisphosphates. Its function is as follows. Possesses 5'-&gt;3' exoribonuclease activity. Required for the processing of nuclear mRNA, rRNA and small nucleolar RNA (snoRNA) precursors. May promote termination of transcription by RNA polymerase II via the recruitment of 3'-end processing factors to the poly(A) site and by the degradation of nascent RNA downstream of the poly(A) site. This Saccharomyces cerevisiae (strain ATCC 204508 / S288c) (Baker's yeast) protein is 5'-3' exoribonuclease 2 (RAT1).